Reading from the N-terminus, the 420-residue chain is Isocitrate dehydrogenase [NADP] (420 aa).

NADP(+) contacts are provided by residues 75 to 77 and Arg82; that span reads TIT. Thr77 provides a ligand contact to substrate. Residues 94–100, Arg109, and Arg132 each bind substrate; that span reads SPNGTIR. A Mn(2+)-binding site is contributed by Asp252. Lys260 contributes to the NADP(+) binding site. Asp275 provides a ligand contact to Mn(2+). NADP(+) is bound by residues 310–315 and Asn328; that span reads GTVTRH.

Belongs to the isocitrate and isopropylmalate dehydrogenases family. The cofactor is Mg(2+). Requires Mn(2+) as cofactor.

The enzyme catalyses D-threo-isocitrate + NADP(+) = 2-oxoglutarate + CO2 + NADPH. May function in the production of NADPH for fatty acid and sterol synthesis. This Saccharomyces cerevisiae (strain ATCC 204508 / S288c) (Baker's yeast) protein is Isocitrate dehydrogenase [NADP] (IDP3).